The chain runs to 87 residues: Protein moa-2 (87 aa).

The interval 23–87 (GTAMRHEPSR…VWTASREESS (65 aa)) is disordered. Composition is skewed to basic and acidic residues over residues 26 to 39 (MRHE…ESAP) and 50 to 63 (RNEH…EREP).

This is Protein moa-2 from Caenorhabditis elegans.